Consider the following 42-residue polypeptide: Photosystem I reaction center subunit IX (42 aa).

A helical transmembrane segment spans residues 7 to 27; the sequence is FLSLGPVLLVLWLSVQATLLI.

The protein belongs to the PsaJ family.

The protein resides in the cellular thylakoid membrane. In terms of biological role, may help in the organization of the PsaE and PsaF subunits. This chain is Photosystem I reaction center subunit IX, found in Gloeothece citriformis (strain PCC 7424) (Cyanothece sp. (strain PCC 7424)).